A 180-amino-acid polypeptide reads, in one-letter code: MRSFCCCFYPAAVALHCVLLFYTFFLLFRASALRRRVVSGSKGSAALALCRQFEQLSASRRERAEECRTTQLRYHYHRNGAQSRSLCAAVLCCKRSYIPRPNFSCFSLVFPVGQRFAAARTRFGPTLVASWPLCNDSETKVLTKWPSCSLIGRRSVPRGQPKFSRENPRALSPSLLGEMR.

An N-terminal signal peptide occupies residues 1-32; the sequence is MRSFCCCFYPAAVALHCVLLFYTFFLLFRASA. 2 propeptides span residues 33 to 35 and 152 to 180; these read LRR and GRRS…GEMR. A disordered region spans residues 155–180; it reads SVPRGQPKFSRENPRALSPSLLGEMR.

Enriched expression in the embryonic and larval nervous systems. Strongly expressed in two large neurons that project over all the lobes of the mushroom bodies.

It is found in the secreted. Required for associative learning and memory in adults. Expression pattern suggests a modulatory role in memory formation. Controls neurotransmitter-mediated signaling pathways associated with the structure of the larval peripheral nerve. The protein is Amnesiac neuropeptides (amn) of Drosophila melanogaster (Fruit fly).